We begin with the raw amino-acid sequence, 202 residues long: Thymidylate kinase (202 aa).

7 to 14 contacts ATP; sequence GIDGSGKT.

The protein belongs to the thymidylate kinase family.

It catalyses the reaction dTMP + ATP = dTDP + ADP. In terms of biological role, phosphorylation of dTMP to form dTDP in both de novo and salvage pathways of dTTP synthesis. This chain is Thymidylate kinase, found in Ehrlichia ruminantium (strain Gardel).